Consider the following 341-residue polypeptide: MRRNSERPVRITEVCLRDGSHVMKHQFTEEQVRSVTRTLDEAGMHYIEVSHGDGLGGSTLQYGKSLVNEMKLIEAAVDECKQAKVAVLLIPGIGTIHELKQAANIGAKLVRVATHVTEADVSAQHIQFARELGMEVCGFLMMAHSASVEKLVEQAKLMESYGAEAVYVTDSAGALLPHEVRERIRALRQSLNIEIGFHGHNNLSVAVANTITAIEEGATRIDGSVRCLGAGAGNAQTEVLLAVLDRMGYKLDIDLYKMMDVAEEGVAPLLPVPQEIQKGSLVMGYAGVYSSFLLHAERAAQRFNVDARDILIELGKRKVVGGQEDMILDVAAELAKIKMEV.

Residues 9 to 259 (VRITEVCLRD…KLDIDLYKMM (251 aa)) enclose the Pyruvate carboxyltransferase domain. 17 to 18 (RD) contacts substrate. Asp-18 contributes to the Mn(2+) binding site. The active-site Proton acceptor is the His-21. Residues Ser-171 and His-198 each contribute to the substrate site. Residues His-198 and His-200 each coordinate Mn(2+). Residue Tyr-289 coordinates substrate.

The protein belongs to the 4-hydroxy-2-oxovalerate aldolase family.

The catalysed reaction is (S)-4-hydroxy-2-oxopentanoate = acetaldehyde + pyruvate. This is 4-hydroxy-2-oxovalerate aldolase from Bacillus cereus (strain ATCC 10987 / NRS 248).